Consider the following 225-residue polypeptide: Ribose-5-phosphate isomerase A (225 aa).

Substrate contacts are provided by residues 33 to 36 (TGST), 86 to 89 (DGAD), and 99 to 102 (KGGG). E108 serves as the catalytic Proton acceptor. K126 provides a ligand contact to substrate.

The protein belongs to the ribose 5-phosphate isomerase family. In terms of assembly, homodimer.

The catalysed reaction is aldehydo-D-ribose 5-phosphate = D-ribulose 5-phosphate. It functions in the pathway carbohydrate degradation; pentose phosphate pathway; D-ribose 5-phosphate from D-ribulose 5-phosphate (non-oxidative stage): step 1/1. Its function is as follows. Catalyzes the reversible conversion of ribose-5-phosphate to ribulose 5-phosphate. This Bordetella petrii (strain ATCC BAA-461 / DSM 12804 / CCUG 43448) protein is Ribose-5-phosphate isomerase A.